We begin with the raw amino-acid sequence, 346 residues long: Cobalt transport protein CbiM (346 aa).

A signal peptide spans Met1 to Ala25. Transmembrane regions (helical) follow at residues Gly31 to Leu51, Pro68 to Pro88, Ile101 to Ile121, Thr133 to Phe153, Leu159 to Tyr179, Phe196 to Val216, Ala255 to Ser275, and Leu312 to Trp332.

The protein belongs to the CbiM family. As to quaternary structure, forms an energy-coupling factor (ECF) transporter complex composed of an ATP-binding protein (A component, CbiO), a transmembrane protein (T component, CbiQ) and 2 possible substrate-capture proteins (S components, CbiM and CbiN) of unknown stoichimetry.

The protein localises to the cell inner membrane. The protein operates within cofactor biosynthesis; adenosylcobalamin biosynthesis. Its function is as follows. Part of the energy-coupling factor (ECF) transporter complex CbiMNOQ involved in cobalt import. This is Cobalt transport protein CbiM from Geobacter sulfurreducens (strain ATCC 51573 / DSM 12127 / PCA).